The sequence spans 821 residues: Lysosomal beta glucosidase (821 aa).

A signal peptide spans 1-24 (MKTIKSLFLLSLLIVNLLISSTYG). A propeptide spanning residues 25–69 (SSIRVSIVGGEEAEVIEKPRTFGNKRELKLEYSQIYPKKQLNQEN) is cleaved from the precursor. Residues Asn-113, Asn-146, and Asn-266 are each glycosylated (N-linked (GlcNAc...) asparagine). The active site involves Asp-363. Residues Asn-535, Asn-555, Asn-703, and Asn-721 are each glycosylated (N-linked (GlcNAc...) asparagine).

Belongs to the glycosyl hydrolase 3 family. Post-translationally, glycosylated. The polyoligosaccharides are of the high-mannose type and are highly substituted with both phosphate and sulfate moieties.

It is found in the lysosome. The catalysed reaction is Hydrolysis of terminal, non-reducing beta-D-glucosyl residues with release of beta-D-glucose.. The polypeptide is Lysosomal beta glucosidase (gluA) (Dictyostelium discoideum (Social amoeba)).